A 418-amino-acid chain; its full sequence is Serine hydroxymethyltransferase (418 aa).

Residues Leu121 and 125–127 (GHL) each bind (6S)-5,6,7,8-tetrahydrofolate. At Lys230 the chain carries N6-(pyridoxal phosphate)lysine. (6S)-5,6,7,8-tetrahydrofolate is bound at residue 355-357 (SPF).

Belongs to the SHMT family. As to quaternary structure, homodimer. The cofactor is pyridoxal 5'-phosphate.

The protein localises to the cytoplasm. It catalyses the reaction (6R)-5,10-methylene-5,6,7,8-tetrahydrofolate + glycine + H2O = (6S)-5,6,7,8-tetrahydrofolate + L-serine. Its pathway is one-carbon metabolism; tetrahydrofolate interconversion. It participates in amino-acid biosynthesis; glycine biosynthesis; glycine from L-serine: step 1/1. Functionally, catalyzes the reversible interconversion of serine and glycine with tetrahydrofolate (THF) serving as the one-carbon carrier. This reaction serves as the major source of one-carbon groups required for the biosynthesis of purines, thymidylate, methionine, and other important biomolecules. Also exhibits THF-independent aldolase activity toward beta-hydroxyamino acids, producing glycine and aldehydes, via a retro-aldol mechanism. The chain is Serine hydroxymethyltransferase from Streptococcus pyogenes serotype M3 (strain ATCC BAA-595 / MGAS315).